A 223-amino-acid polypeptide reads, in one-letter code: dITP/XTP pyrophosphatase (223 aa).

Position 9–14 (9–14 (TTNQNK)) interacts with substrate. Aspartate 71 (proton acceptor) is an active-site residue. Aspartate 71 lines the Mg(2+) pocket. Residues serine 72, 152–155 (FGYD), lysine 175, and 180–181 (HR) each bind substrate. Positions 203–223 (LSEEKPAKPDHSEFEGNDWSK) are disordered.

It belongs to the HAM1 NTPase family. In terms of assembly, homodimer. The cofactor is Mg(2+).

It catalyses the reaction XTP + H2O = XMP + diphosphate + H(+). The enzyme catalyses dITP + H2O = dIMP + diphosphate + H(+). The catalysed reaction is ITP + H2O = IMP + diphosphate + H(+). In terms of biological role, pyrophosphatase that catalyzes the hydrolysis of nucleoside triphosphates to their monophosphate derivatives, with a high preference for the non-canonical purine nucleotides XTP (xanthosine triphosphate), dITP (deoxyinosine triphosphate) and ITP. Seems to function as a house-cleaning enzyme that removes non-canonical purine nucleotides from the nucleotide pool, thus preventing their incorporation into DNA/RNA and avoiding chromosomal lesions. The polypeptide is dITP/XTP pyrophosphatase (Desulfotalea psychrophila (strain LSv54 / DSM 12343)).